The sequence spans 208 residues: Outer-membrane lipoprotein carrier protein (208 aa).

Residues 1–21 (MKKLNTLLLVLGSLVATPSFA) form the signal peptide. Residues 188 to 208 (KSTFEFTPPEGVEIDDQSNGE) are disordered. Residues 199–208 (VEIDDQSNGE) show a composition bias toward acidic residues.

This sequence belongs to the LolA family. As to quaternary structure, monomer.

The protein localises to the periplasm. Participates in the translocation of lipoproteins from the inner membrane to the outer membrane. Only forms a complex with a lipoprotein if the residue after the N-terminal Cys is not an aspartate (The Asp acts as a targeting signal to indicate that the lipoprotein should stay in the inner membrane). This chain is Outer-membrane lipoprotein carrier protein, found in Pseudoalteromonas translucida (strain TAC 125).